The sequence spans 126 residues: Fluoride-specific ion channel FluC 2 (126 aa).

Helical transmembrane passes span 11-31, 36-56, 69-89, and 93-113; these read VLLI…ICEH, LGIL…MYDA, AFGT…VQSF, and FLPA…GVFF. 2 residues coordinate Na(+): Gly76 and Thr79.

It belongs to the fluoride channel Fluc/FEX (TC 1.A.43) family.

It localises to the cell membrane. It catalyses the reaction fluoride(in) = fluoride(out). Its activity is regulated as follows. Na(+) is not transported, but it plays an essential structural role and its presence is essential for fluoride channel function. Its function is as follows. Fluoride-specific ion channel. Important for reducing fluoride concentration in the cell, thus reducing its toxicity. This chain is Fluoride-specific ion channel FluC 2, found in Methanosarcina mazei (strain ATCC BAA-159 / DSM 3647 / Goe1 / Go1 / JCM 11833 / OCM 88) (Methanosarcina frisia).